The following is a 26-amino-acid chain: Somatostatin-1 (26 aa).

Cys15 and Cys26 are joined by a disulfide.

This sequence belongs to the somatostatin family.

Its subcellular location is the secreted. Functionally, somatostatin inhibits the release of somatotropin. This chain is Somatostatin-1 (sst1), found in Amia calva (Bowfin).